Consider the following 1281-residue polypeptide: Zinc finger transcription factor Trps1 (1281 aa).

Disordered regions lie at residues 1–101 (MVRK…VSFP) and 116–204 (PAAG…KGDL). Polar residues-rich tracts occupy residues 21-31 (LEPTATESKVS) and 40-49 (DQMSENTDQS). A Glycyl lysine isopeptide (Lys-Gly) (interchain with G-Cter in SUMO2) cross-link involves residue Lys-29. Residues Ser-90 and Ser-127 each carry the phosphoserine modification. The span at 148 to 162 (LETKEEHKMSPKATE) shows a compositional bias: basic and acidic residues. Over residues 166 to 189 (PVQSGQANCQGLSPVSVASKNPQV) the composition is skewed to polar residues. Ser-178 and Ser-216 each carry phosphoserine. The C2H2-type 1; atypical zinc-finger motif lies at 222–247 (FKCNICGYGYYGNDPTDLIKHFRKYH). A Glycyl lysine isopeptide (Lys-Gly) (interchain with G-Cter in SUMO2) cross-link involves residue Lys-263. The C2H2-type 2; atypical zinc-finger motif lies at 333 to 358 (FRCKFCNFTYMGNSSTELEQHFLQTH). The tract at residues 365-393 (SLPSSEGVKPSEKNSNKSIPALRASDSGD) is disordered. Residues Lys-418, Lys-457, Lys-474, and Lys-488 each participate in a glycyl lysine isopeptide (Lys-Gly) (interchain with G-Cter in SUMO2) cross-link. The interval 484 to 515 (NDLAKSVEGEPLTKPEKGLSGAKKKDFPSKGA) is disordered. Basic and acidic residues predominate over residues 488-515 (KSVEGEPLTKPEKGLSGAKKKDFPSKGA). The C2H2-type 3; atypical zinc-finger motif lies at 614-637 (HQCHQCSFSTPDVDVLLFHYETVH). A mediates interaction with GLI3 region spans residues 635 to 819 (TVHESQASDV…SLGLLTPVSS (185 aa)). Residue Lys-645 forms a Glycyl lysine isopeptide (Lys-Gly) (interchain with G-Cter in SUMO2) linkage. 2 consecutive C2H2-type zinc fingers follow at residues 666-689 (HSCTKCDFITQVEEEISRHYRRAH) and 692-715 (YKCRQCSFTAADTQSLLEHFNTVH). Glycyl lysine isopeptide (Lys-Gly) (interchain with G-Cter in SUMO2) cross-links involve residues Lys-737 and Lys-755. Residue Lys-766 forms a Glycyl lysine isopeptide (Lys-Gly) (interchain with G-Cter in SUMO1); alternate linkage. A Glycyl lysine isopeptide (Lys-Gly) (interchain with G-Cter in SUMO2); alternate cross-link involves residue Lys-766. Residues Lys-825 and Lys-850 each participate in a glycyl lysine isopeptide (Lys-Gly) (interchain with G-Cter in SUMO2) cross-link. Residues 856-885 (APAGSEKSASLTQQYPASGESKTKDESQSL) are disordered. The segment covering 862 to 871 (KSASLTQQYP) has biased composition (polar residues). Residues Lys-877 and Lys-879 each participate in a glycyl lysine isopeptide (Lys-Gly) (interchain with G-Cter in SUMO2) cross-link. A GATA-type zinc finger spans residues 896-920 (CANCLTTKTSLWRKNANGGYVCNAC). Glycyl lysine isopeptide (Lys-Gly) (interchain with G-Cter in SUMO2) cross-links involve residues Lys-925, Lys-937, and Lys-965. Residues 961–977 (EQLNKQQRGSGEEQVNG) are compositionally biased toward polar residues. The interval 961-1000 (EQLNKQQRGSGEEQVNGSPLERRSEDHLSESHPREIPLPS) is disordered. The residue at position 978 (Ser-978) is a Phosphoserine. Over residues 980–995 (LERRSEDHLSESHPRE) the composition is skewed to basic and acidic residues. The interval 985–1184 (EDHLSESHPR…PTANGASKEK (200 aa)) is mediates interaction with RNF4. Residues Lys-1003, Lys-1012, Lys-1030, and Lys-1040 each participate in a glycyl lysine isopeptide (Lys-Gly) (interchain with G-Cter in SUMO2) cross-link. Residues 1040 to 1049 (KSPQESTGDP) are compositionally biased toward polar residues. Positions 1040–1078 (KSPQESTGDPGNSSSVSDGKGSSERGSPIEKYMRPAKHP) are disordered. Ser-1041 carries the phosphoserine modification. Over residues 1050–1059 (GNSSSVSDGK) the composition is skewed to low complexity. Residues 1060–1072 (GSSERGSPIEKYM) are compositionally biased toward basic and acidic residues. A Phosphoserine modification is found at Ser-1066. A Glycyl lysine isopeptide (Lys-Gly) (interchain with G-Cter in SUMO2) cross-link involves residue Lys-1070. Ser-1085 carries the phosphoserine modification. Residues 1163 to 1281 (PLDLAIKHSR…QAEKNGKPKE (119 aa)) are transcriptional repressor domain. Residues 1169–1195 (KHSRPGPTANGASKEKTKAPPTVKNED) form a disordered region. Residues Lys-1192 and Lys-1201 each participate in a glycyl lysine isopeptide (Lys-Gly) (interchain with G-Cter in SUMO2); alternate cross-link. Glycyl lysine isopeptide (Lys-Gly) (interchain with G-Cter in SUMO); alternate cross-links involve residues Lys-1192 and Lys-1201. Lys-1201 participates in a covalent cross-link: Glycyl lysine isopeptide (Lys-Gly) (interchain with G-Cter in SUMO1); alternate. C2H2-type zinc fingers lie at residues 1215 to 1237 (TKCVHCGIVFLDEVMYALHMSCH) and 1243 to 1267 (FQCSICQHLCTDKYDFTTHIQRGLH).

As to quaternary structure, interacts with RNF4; regulates TRPS1 repressor activity. Interacts specifically with the activator form of GLI3 (GLI3A) but not with the repressor form (GLI3R). Sumoylated. Sumoylation in the repressor domain inhibits the transcription repression activity. Sumoylation on Lys-1201 is the major site. Appears to be sumoylated on multiple sites. In terms of tissue distribution, in the embryo, expression is detected in both visceral and skeletal tissues. Found in the maxilla, mandible, snout, prospective phalanges and in the femoral head within the developing hip. Also expressed in the hair follicles.

It is found in the nucleus. Its function is as follows. Transcriptional repressor. Binds specifically to GATA sequences and represses expression of GATA-regulated genes at selected sites and stages in vertebrate development. Regulates chondrocyte proliferation and differentiation. Executes multiple functions in proliferating chondrocytes, expanding the region of distal chondrocytes, activating proliferation in columnar cells and supporting the differentiation of columnar into hypertrophic chondrocytes. In Mus musculus (Mouse), this protein is Zinc finger transcription factor Trps1 (Trps1).